We begin with the raw amino-acid sequence, 815 residues long: Protein SMAX1-LIKE 3 (815 aa).

In terms of domain architecture, Clp R spans 8–171 (VEQALTADAA…TKVEQAVSLE (164 aa)). Repeat regions lie at residues 12–80 (LTAD…LNRL) and 99–171 (ISNA…VSLE). The tract at residues 750–769 (SRACSPPSNQKSDGSDQPED) is disordered. The EAR signature appears at 778–782 (LDLNL).

It belongs to the ClpA/ClpB family. In terms of assembly, interacts probably with TPL/TPR in an EAR-motif dependent manner. Expressed in roots and seedlings.

May function in a transcriptional corepressor complex. This Arabidopsis thaliana (Mouse-ear cress) protein is Protein SMAX1-LIKE 3.